The chain runs to 573 residues: N(2)-(2-carboxyethyl)arginine synthase (573 aa).

Residues Y271 and D301 each coordinate substrate. 410 to 413 (IGFF) is a thiamine diphosphate binding site. 414-415 (RH) contacts substrate. Position 436-438 (436-438 (SSF)) interacts with thiamine diphosphate. D463 provides a ligand contact to Mg(2+). Thiamine diphosphate is bound by residues 464-465 (GG), 490-495 (NDTNGL), and Y561. Positions 490 and 492 each coordinate Mg(2+). Residue L571 coordinates substrate.

As to quaternary structure, homotetramer; dimer of dimers. Mg(2+) is required as a cofactor. It depends on thiamine diphosphate as a cofactor.

It carries out the reaction D-glyceraldehyde 3-phosphate + L-arginine = N(2)-(2-carboxyethyl)-L-arginine + phosphate + H(+). Functionally, involved in the biosynthesis of the beta-lactamase inhibitor, clavulanic acid. Catalyzes the thiamine diphosphate (ThDP) dependent condensation of D-glyceraldehyde-3-phosphate (D-G3P) with L-arginine to yield the beta-amino acid, N2-(2-carboxyethyl)arginine (CEA) via a beta-elimination resulting in the formation of an enol which undergoes a second elimination to generate the alpha,beta-unsaturated acryloyl-ThDP. The protein is N(2)-(2-carboxyethyl)arginine synthase of Streptomyces clavuligerus.